A 421-amino-acid polypeptide reads, in one-letter code: Imidazolonepropionase (421 aa).

2 residues coordinate Fe(3+): His-81 and His-83. The Zn(2+) site is built by His-81 and His-83. The 4-imidazolone-5-propanoate site is built by Arg-90, Tyr-153, and His-186. Residue Tyr-153 coordinates N-formimidoyl-L-glutamate. His-251 contributes to the Fe(3+) binding site. His-251 is a Zn(2+) binding site. Glu-254 contacts 4-imidazolone-5-propanoate. Asp-326 is a Fe(3+) binding site. Position 326 (Asp-326) interacts with Zn(2+). N-formimidoyl-L-glutamate-binding residues include Asn-328 and Gly-330. Residue Ser-331 participates in 4-imidazolone-5-propanoate binding.

This sequence belongs to the metallo-dependent hydrolases superfamily. HutI family. It depends on Zn(2+) as a cofactor. Requires Fe(3+) as cofactor.

It is found in the cytoplasm. It carries out the reaction 4-imidazolone-5-propanoate + H2O = N-formimidoyl-L-glutamate. It functions in the pathway amino-acid degradation; L-histidine degradation into L-glutamate; N-formimidoyl-L-glutamate from L-histidine: step 3/3. In terms of biological role, catalyzes the hydrolytic cleavage of the carbon-nitrogen bond in imidazolone-5-propanoate to yield N-formimidoyl-L-glutamate. It is the third step in the universal histidine degradation pathway. In Streptococcus pyogenes serotype M28 (strain MGAS6180), this protein is Imidazolonepropionase.